The primary structure comprises 356 residues: UDP-N-acetylglucosamine--N-acetylmuramyl-(pentapeptide) pyrophosphoryl-undecaprenol N-acetylglucosamine transferase (356 aa).

Residues 15-17, Asn-127, Arg-163, Ser-191, Ile-244, 263-268, and Gln-288 contribute to the UDP-N-acetyl-alpha-D-glucosamine site; these read TGG and ALTVSE.

It belongs to the glycosyltransferase 28 family. MurG subfamily.

Its subcellular location is the cell inner membrane. The catalysed reaction is di-trans,octa-cis-undecaprenyl diphospho-N-acetyl-alpha-D-muramoyl-L-alanyl-D-glutamyl-meso-2,6-diaminopimeloyl-D-alanyl-D-alanine + UDP-N-acetyl-alpha-D-glucosamine = di-trans,octa-cis-undecaprenyl diphospho-[N-acetyl-alpha-D-glucosaminyl-(1-&gt;4)]-N-acetyl-alpha-D-muramoyl-L-alanyl-D-glutamyl-meso-2,6-diaminopimeloyl-D-alanyl-D-alanine + UDP + H(+). It functions in the pathway cell wall biogenesis; peptidoglycan biosynthesis. Functionally, cell wall formation. Catalyzes the transfer of a GlcNAc subunit on undecaprenyl-pyrophosphoryl-MurNAc-pentapeptide (lipid intermediate I) to form undecaprenyl-pyrophosphoryl-MurNAc-(pentapeptide)GlcNAc (lipid intermediate II). The chain is UDP-N-acetylglucosamine--N-acetylmuramyl-(pentapeptide) pyrophosphoryl-undecaprenol N-acetylglucosamine transferase from Yersinia pseudotuberculosis serotype O:1b (strain IP 31758).